Here is a 254-residue protein sequence, read N- to C-terminus: Dihydroorotate dehydrogenase B (NAD(+)), electron transfer subunit (254 aa).

The region spanning 1 to 99 (MLQTEMKVIQ…LGPLGKGFDI (99 aa)) is the FAD-binding FR-type domain. Residues 50 to 53 (RPIS), 67 to 69 (LYR), and 74 to 75 (GT) contribute to the FAD site. Residues Cys218, Cys223, Cys226, and Cys241 each coordinate [2Fe-2S] cluster.

Belongs to the PyrK family. In terms of assembly, heterotetramer of 2 PyrK and 2 PyrD type B subunits. The cofactor is [2Fe-2S] cluster. FAD is required as a cofactor.

Its pathway is pyrimidine metabolism; UMP biosynthesis via de novo pathway; orotate from (S)-dihydroorotate (NAD(+) route): step 1/1. In terms of biological role, responsible for channeling the electrons from the oxidation of dihydroorotate from the FMN redox center in the PyrD type B subunit to the ultimate electron acceptor NAD(+). This is Dihydroorotate dehydrogenase B (NAD(+)), electron transfer subunit from Listeria monocytogenes serovar 1/2a (strain ATCC BAA-679 / EGD-e).